The following is a 390-amino-acid chain: Pyruvate dehydrogenase E1 component subunit alpha, somatic form, mitochondrial (390 aa).

The N-terminal 29 residues, 1–29, are a transit peptide targeting the mitochondrion; that stretch reads MRKMLAAVSRVLSGASQKPASRVLVASRN. At Lys-63 the chain carries N6-acetyllysine; alternate. Lys-63 is subject to N6-succinyllysine; alternate. The pyruvate site is built by His-92, Tyr-118, Arg-119, Ala-157, Gly-165, Val-167, Asp-196, Gly-197, Ala-198, Asn-225, and Tyr-227. Positions 118 and 119 each coordinate thiamine diphosphate. Positions 165, 167, 196, 197, 198, and 225 each coordinate thiamine diphosphate. Asp-196 serves as a coordination point for Mg(2+). The Mg(2+) site is built by Asn-225 and Tyr-227. The residue at position 232 (Ser-232) is a Phosphoserine; by PDK1. Lys-244 is subject to N6-acetyllysine; alternate. Position 244 is an N6-succinyllysine; alternate (Lys-244). At Lys-277 the chain carries N6-succinyllysine. His-292 lines the thiamine diphosphate pocket. Residue Ser-293 is modified to Phosphoserine; by PDK1, PDK2, PDK3 and PDK4. Ser-295 bears the Phosphoserine mark. Ser-300 is modified (phosphoserine; by PDK1, PDK2, PDK3 and PDK4). Tyr-301 is modified (phosphotyrosine). Lys-313 carries the N6-acetyllysine; alternate modification. Lys-313 carries the N6-succinyllysine; alternate modification. An N6-acetyllysine mark is found at Lys-321 and Lys-336. An N6-succinyllysine modification is found at Lys-385.

Heterotetramer of two PDHA1 and two PDHB subunits. The heterotetramer interacts with DLAT, and is part of the multimeric pyruvate dehydrogenase complex that contains multiple copies of pyruvate dehydrogenase (E1), dihydrolipoamide acetyltransferase (DLAT, E2) and lipoamide dehydrogenase (DLD, E3). These subunits are bound to an inner core composed of about 48 DLAT and 12 PDHX molecules. It depends on thiamine diphosphate as a cofactor. Mg(2+) is required as a cofactor. Post-translationally, phosphorylation at Ser-232, Ser-293 and Ser-300 by PDK family kinases inactivates the enzyme; for this phosphorylation at a single site is sufficient. Phosphorylation at Ser-293 interferes with access to active site, and thereby inactivates the enzyme. Dephosphorylation at all three sites, i.e. at Ser-232, Ser-293 and Ser-300, is required for reactivation. Acetylation alters the phosphorylation pattern. Deacetylated by SIRT3.

The protein resides in the mitochondrion matrix. The catalysed reaction is N(6)-[(R)-lipoyl]-L-lysyl-[protein] + pyruvate + H(+) = N(6)-[(R)-S(8)-acetyldihydrolipoyl]-L-lysyl-[protein] + CO2. Pyruvate dehydrogenase activity is inhibited by phosphorylation of PDHA1; it is reactivated by dephosphorylation. The pyruvate dehydrogenase complex catalyzes the overall conversion of pyruvate to acetyl-CoA and CO(2), and thereby links the glycolytic pathway to the tricarboxylic cycle. The sequence is that of Pyruvate dehydrogenase E1 component subunit alpha, somatic form, mitochondrial (PDHA1) from Macaca fascicularis (Crab-eating macaque).